Consider the following 105-residue polypeptide: Large ribosomal subunit protein bL21 (105 aa).

It belongs to the bacterial ribosomal protein bL21 family. In terms of assembly, part of the 50S ribosomal subunit. Contacts protein L20.

This protein binds to 23S rRNA in the presence of protein L20. The polypeptide is Large ribosomal subunit protein bL21 (Rhizobium etli (strain ATCC 51251 / DSM 11541 / JCM 21823 / NBRC 15573 / CFN 42)).